Here is a 337-residue protein sequence, read N- to C-terminus: MKKIPVGIVGVSGYTGLELLKMLLEHPYLELVYAANTEGGVRVGALHSSLQGVSDLSVEKADPKEAAKRCELLFLALPHQSAMEFAKEVLSLGKKVVDLSADYRLSLERYEAHYCPHLDKENLSHAVYGLIEWAREEIVQARLIANPGCYPTATLLGILPFIPYLDEDSSLFVDAKSGVSGAGKKLTHNTHYPTINENLFAYSPLSHRHEPEIAEKIELWGKKAKKVNFIPHLTPLTRGMLVSTFARLKEPVDAMAILRERYANEPFIRLRSSPVEIKAVAGTHFCDIYAMSQGRDLWVNSAIDNLLRGASSQAIANANLMLGLPEGAGLPRFAYAP.

C149 is a catalytic residue.

Belongs to the NAGSA dehydrogenase family. Type 1 subfamily.

It localises to the cytoplasm. The enzyme catalyses N-acetyl-L-glutamate 5-semialdehyde + phosphate + NADP(+) = N-acetyl-L-glutamyl 5-phosphate + NADPH + H(+). It functions in the pathway amino-acid biosynthesis; L-arginine biosynthesis; N(2)-acetyl-L-ornithine from L-glutamate: step 3/4. In terms of biological role, catalyzes the NADPH-dependent reduction of N-acetyl-5-glutamyl phosphate to yield N-acetyl-L-glutamate 5-semialdehyde. This Wolinella succinogenes (strain ATCC 29543 / DSM 1740 / CCUG 13145 / JCM 31913 / LMG 7466 / NCTC 11488 / FDC 602W) (Vibrio succinogenes) protein is N-acetyl-gamma-glutamyl-phosphate reductase.